The sequence spans 967 residues: Sodium/potassium exporting P-type ATPase 1 (967 aa).

At 1 to 70 (MEGSGDKRHE…GVNPWKILLR (70 aa)) the chain is on the cytoplasmic side. The helical transmembrane segment at 71–91 (QVSNGLTAVLVVAMVVSFAVK) threads the bilayer. Residue aspartate 92 is a topological domain, extracellular. A helical transmembrane segment spans residues 93–113 (YAEAGVLVIVIAFNTIVGFVQ). The Cytoplasmic segment spans residues 114 to 254 (EYRAEKTMDA…TQSTPMQRKL (141 aa)). A helical membrane pass occupies residues 255-275 (NLMAYMLLAFALLLALIVFAV). The Extracellular portion of the chain corresponds to 276–283 (NKFNFSTE). Asparagine 279 is a glycosylation site (N-linked (GlcNAc...) asparagine). The helical transmembrane segment at 284-304 (VVIYAIALSIAIIPEGLIAVI) threads the bilayer. Residues 305-732 (TIVQALGVRR…GRRIFSNIKK (428 aa)) lie on the Cytoplasmic side of the membrane. Aspartate 340 functions as the 4-aspartylphosphate intermediate in the catalytic mechanism. Aspartate 340 and threonine 342 together coordinate Mg(2+). Threonine 342, glutamate 425, lysine 478, arginine 523, threonine 587, glycine 588, aspartate 589, arginine 651, and lysine 657 together coordinate ATP. Mg(2+) is bound at residue aspartate 676. ATP is bound at residue asparagine 679. The chain crosses the membrane as a helical span at residues 733-753 (FVLHLLSTNVGQVIVLLIGLA). Residues 754-812 (FKDRTGTSVFPLSPVQILFLNLVTGTPPAMALGIEPASSSVMQVPPHVKGLFTVELIMD) lie on the Extracellular side of the membrane. A helical membrane pass occupies residues 813–833 (IFIFGTFIGILALASWVLVIY). The Cytoplasmic portion of the chain corresponds to 834–900 (PFGNSDLATL…GGASRFFSNK (67 aa)). The helical transmembrane segment at 901–921 (VLVASVFIGALLPIPTIYIGT) threads the bilayer. The Extracellular portion of the chain corresponds to 922–931 (LNTEVFKQEG). Residues 932 to 952 (ITWEWIIVIVSVFVFFLLSEF) traverse the membrane as a helical segment. The Cytoplasmic portion of the chain corresponds to 953–967 (YKLLKRRFIKTPYNM).

The protein belongs to the cation transport ATPase (P-type) (TC 3.A.3) family. Type IID subfamily. Mg(2+) is required as a cofactor. Post-translationally, the active site is phosphorylated in presence of sodium or potassium and in conditions of higher pH. Not phosphorylated in presence of calcium ions.

It localises to the cell membrane. It carries out the reaction Na(+)(in) + ATP + H2O = Na(+)(out) + ADP + phosphate + H(+). It catalyses the reaction K(+)(in) + ATP + H2O = K(+)(out) + ADP + phosphate + H(+). Functionally, catalyzes the hydrolysis of ATP coupled with the export of sodium and potassium from the cell. May pump potassium inefficiently. May transport other cations such as lithium. Sodium/potassium efflux ATPases are involved in salt tolerance and maintaining the membrane potential across the plasma membrane in high salinity (Na+) or alkaline (K+) environments. In Physcomitrium patens (Spreading-leaved earth moss), this protein is Sodium/potassium exporting P-type ATPase 1.